Here is an 86-residue protein sequence, read N- to C-terminus: Large ribosomal subunit protein bL27 (86 aa).

The interval 1 to 26 (MATKKAGGSSRNGRDSAGRRLGIKKS) is disordered.

The protein belongs to the bacterial ribosomal protein bL27 family.

The protein is Large ribosomal subunit protein bL27 of Rickettsia typhi (strain ATCC VR-144 / Wilmington).